A 234-amino-acid polypeptide reads, in one-letter code: MTPSEQNIDKEELAKFSDLAQDWWNPAGKMKPLHLINPVRLKYIEQQITLKGKHVLDVGCGGGLLSEALAKHGAIVTGVDMSESLIDVAKNHAEQQQLNINYQCQDIEILTKDAQRFDIITCMELLEHVPDPQRMIKNCAALIKPGGKLFFSTINRNFKAYLYTIVGAEYVFNLLPKGTHDYAQFIRPSELTQWAESGGLRLLDITGIHYHPLKNEFDLSRDVSVNYLACFTHE.

S-adenosyl-L-methionine contacts are provided by Arg40, Gly59, Asp80, and Met123.

Belongs to the methyltransferase superfamily. UbiG/COQ3 family.

It carries out the reaction a 3-demethylubiquinol + S-adenosyl-L-methionine = a ubiquinol + S-adenosyl-L-homocysteine + H(+). It catalyses the reaction a 3-(all-trans-polyprenyl)benzene-1,2-diol + S-adenosyl-L-methionine = a 2-methoxy-6-(all-trans-polyprenyl)phenol + S-adenosyl-L-homocysteine + H(+). It participates in cofactor biosynthesis; ubiquinone biosynthesis. Its function is as follows. O-methyltransferase that catalyzes the 2 O-methylation steps in the ubiquinone biosynthetic pathway. The sequence is that of Ubiquinone biosynthesis O-methyltransferase from Coxiella burnetii (strain CbuK_Q154) (Coxiella burnetii (strain Q154)).